A 385-amino-acid polypeptide reads, in one-letter code: Enoyl-[acyl-carrier-protein] reductase, mitochondrial (385 aa).

The active-site Proton donor is tyrosine 78. NADP(+) is bound by residues asparagine 162, 190–193, 213–215, 288–291, 313–315, and lysine 378; these read TSGV, RDR, YGGM, and YWV.

The protein belongs to the zinc-containing alcohol dehydrogenase family. Quinone oxidoreductase subfamily. As to quaternary structure, homodimer.

The protein localises to the mitochondrion matrix. It catalyses the reaction a 2,3-saturated acyl-[ACP] + NADP(+) = a (2E)-enoyl-[ACP] + NADPH + H(+). In terms of biological role, catalyzes the NADPH-dependent reduction of trans-2-enoyl thioesters in mitochondrial fatty acid synthesis (fatty acid synthesis type II). Fatty acid chain elongation in mitochondria uses acyl carrier protein (ACP) as an acyl group carrier, but the enzyme accepts both ACP and CoA thioesters as substrates in vitro. Required for respiration and the maintenance of the mitochondrial compartment. In Candida glabrata (strain ATCC 2001 / BCRC 20586 / JCM 3761 / NBRC 0622 / NRRL Y-65 / CBS 138) (Yeast), this protein is Enoyl-[acyl-carrier-protein] reductase, mitochondrial (ETR1).